The sequence spans 334 residues: Probable GTP 3',8-cyclase (334 aa).

In terms of domain architecture, Radical SAM core spans 24–256 (PYGRKVTGLR…RKKYIIDGVE (233 aa)). Residue R33 coordinates GTP. Positions 40 and 44 each coordinate [4Fe-4S] cluster. Y46 serves as a coordination point for S-adenosyl-L-methionine. A [4Fe-4S] cluster-binding site is contributed by C47. K85 is a binding site for GTP. G89 contacts S-adenosyl-L-methionine. T113 is a binding site for GTP. S137 is an S-adenosyl-L-methionine binding site. Position 176 (K176) interacts with GTP. Residues C269 and C272 each coordinate [4Fe-4S] cluster. 274–276 (RLR) contacts GTP. Residue C286 coordinates [4Fe-4S] cluster.

This sequence belongs to the radical SAM superfamily. MoaA family. Requires [4Fe-4S] cluster as cofactor.

The catalysed reaction is GTP + AH2 + S-adenosyl-L-methionine = (8S)-3',8-cyclo-7,8-dihydroguanosine 5'-triphosphate + 5'-deoxyadenosine + L-methionine + A + H(+). It functions in the pathway cofactor biosynthesis; molybdopterin biosynthesis. In terms of biological role, catalyzes the cyclization of GTP to (8S)-3',8-cyclo-7,8-dihydroguanosine 5'-triphosphate. In Methanosarcina acetivorans (strain ATCC 35395 / DSM 2834 / JCM 12185 / C2A), this protein is Probable GTP 3',8-cyclase.